The sequence spans 381 residues: Tryptophan--tRNA ligase (381 aa).

Residues 82–90 (PSLGMHIGH) carry the 'HIGH' region motif. The 'KMSKS' region signature appears at 254–258 (KMSSS).

This sequence belongs to the class-I aminoacyl-tRNA synthetase family.

Its subcellular location is the cytoplasm. The enzyme catalyses tRNA(Trp) + L-tryptophan + ATP = L-tryptophyl-tRNA(Trp) + AMP + diphosphate + H(+). This chain is Tryptophan--tRNA ligase, found in Sulfurisphaera tokodaii (strain DSM 16993 / JCM 10545 / NBRC 100140 / 7) (Sulfolobus tokodaii).